The following is a 411-amino-acid chain: Methylthioribose-1-phosphate isomerase (411 aa).

N-acetylserine is present on Ser-2. The active-site Proton donor is the Asp-280. Ser-351 bears the Phosphoserine mark.

Belongs to the eIF-2B alpha/beta/delta subunits family. MtnA subfamily. As to quaternary structure, homodimer.

The protein localises to the cytoplasm. Its subcellular location is the nucleus. It carries out the reaction 5-(methylsulfanyl)-alpha-D-ribose 1-phosphate = 5-(methylsulfanyl)-D-ribulose 1-phosphate. It participates in amino-acid biosynthesis; L-methionine biosynthesis via salvage pathway; L-methionine from S-methyl-5-thio-alpha-D-ribose 1-phosphate: step 1/6. Functionally, catalyzes the interconversion of methylthioribose-1-phosphate (MTR-1-P) into methylthioribulose-1-phosphate (MTRu-1-P). This is Methylthioribose-1-phosphate isomerase from Saccharomyces cerevisiae (strain JAY291) (Baker's yeast).